Reading from the N-terminus, the 376-residue chain is MAEQGKQGGKVPFGPDYVRAISPYIAGKPISEVAREFGLDEAGIVKLASNENPLGMPESAKHAAAAAIAELGRYPDSNGFELKAALSTKLGVPQDWLTLGNGSNDILELAAHALVTPGQSIVYAEYSFAVYALATQEIGARAIVVKARDYGHDLDAMAAAITSDTRLVFIANPNNPTGTFVPAAALETFLAKVPAEVVVVLDEAYNEYLDDDQQYDSVAWVRRYPNLLVSRTFSKAYGLAGLRIGYAVAQPELTDLLNRIRQPFNVNSVAQAAAVAALGDTAFLQRSAELNRAGKAQLVEAFSRLGLEFVASSGNFVLVRVGDDDDAGARVNVALLRQGVIVRPVGNYGMPRWLRVTIGLPDENAAFIAALERALK.

Residue lysine 235 is modified to N6-(pyridoxal phosphate)lysine.

It belongs to the class-II pyridoxal-phosphate-dependent aminotransferase family. Histidinol-phosphate aminotransferase subfamily. In terms of assembly, homodimer. Requires pyridoxal 5'-phosphate as cofactor.

The catalysed reaction is L-histidinol phosphate + 2-oxoglutarate = 3-(imidazol-4-yl)-2-oxopropyl phosphate + L-glutamate. The protein operates within amino-acid biosynthesis; L-histidine biosynthesis; L-histidine from 5-phospho-alpha-D-ribose 1-diphosphate: step 7/9. This chain is Histidinol-phosphate aminotransferase 1, found in Cupriavidus pinatubonensis (strain JMP 134 / LMG 1197) (Cupriavidus necator (strain JMP 134)).